Reading from the N-terminus, the 170-residue chain is Adenine phosphoribosyltransferase (170 aa).

This sequence belongs to the purine/pyrimidine phosphoribosyltransferase family. Homodimer.

It localises to the cytoplasm. It catalyses the reaction AMP + diphosphate = 5-phospho-alpha-D-ribose 1-diphosphate + adenine. Its pathway is purine metabolism; AMP biosynthesis via salvage pathway; AMP from adenine: step 1/1. In terms of biological role, catalyzes a salvage reaction resulting in the formation of AMP, that is energically less costly than de novo synthesis. This is Adenine phosphoribosyltransferase from Brachyspira hyodysenteriae (strain ATCC 49526 / WA1).